The sequence spans 894 residues: Protein SEY1 (894 aa).

Positions 1-64 (MGLDVDSVPI…PRALEPAQVT (64 aa)) are disordered. Over 1–768 (MGLDVDSVPI…KRGTVSSMSQ (768 aa)) the chain is Cytoplasmic. Residues 9 to 24 (PIAEAAAPSSMAATEP) show a composition bias toward low complexity. Over residues 40–53 (APMNTDSSRETMPT) the composition is skewed to polar residues. The 223-residue stretch at 137–359 (GFGYDICAVL…DESYVFKTEY (223 aa)) folds into the GB1/RHD3-type G domain. 147-154 (GSQSTGKS) is a binding site for GTP. Residues 536–559 (KVDDERAQLLDELHTLARTLRANE) are a coiled coil. A helical transmembrane segment spans residues 769-789 (VPIWMYGVLVVLGWNEAMAVL). Residues 790 to 792 (RNP) lie on the Lumenal side of the membrane. A helical membrane pass occupies residues 793–813 (VYFTLLCMVLATAYVIWRLNL). At 814–894 (GTPVLALASG…DSHPRLPASF (81 aa)) the chain is on the cytoplasmic side. The tract at residues 841 to 894 (DGTPPSANRAREYRVPSGSTAHVSEKTPHRPLTTSGAAEADTVEDSHPRLPASF) is disordered.

This sequence belongs to the TRAFAC class dynamin-like GTPase superfamily. GB1/RHD3 GTPase family. RHD3 subfamily.

The protein resides in the endoplasmic reticulum membrane. Cooperates with the reticulon proteins and tubule-shaping DP1 family proteins to generate and maintain the structure of the tubular endoplasmic reticulum network. Has GTPase activity, which is required for its function in ER organization. This chain is Protein SEY1, found in Malassezia globosa (strain ATCC MYA-4612 / CBS 7966) (Dandruff-associated fungus).